The sequence spans 95 residues: Co-chaperonin GroES (95 aa).

The protein belongs to the GroES chaperonin family. Heptamer of 7 subunits arranged in a ring. Interacts with the chaperonin GroEL.

Its subcellular location is the cytoplasm. In terms of biological role, together with the chaperonin GroEL, plays an essential role in assisting protein folding. The GroEL-GroES system forms a nano-cage that allows encapsulation of the non-native substrate proteins and provides a physical environment optimized to promote and accelerate protein folding. GroES binds to the apical surface of the GroEL ring, thereby capping the opening of the GroEL channel. The polypeptide is Co-chaperonin GroES (Xylella fastidiosa (strain M23)).